A 201-amino-acid polypeptide reads, in one-letter code: UPF0637 protein LSEI_1198 (201 aa).

It belongs to the UPF0637 family.

The protein is UPF0637 protein LSEI_1198 of Lacticaseibacillus paracasei (strain ATCC 334 / BCRC 17002 / CCUG 31169 / CIP 107868 / KCTC 3260 / NRRL B-441) (Lactobacillus paracasei).